The following is a 512-amino-acid chain: Cobyric acid synthase (512 aa).

The GATase cobBQ-type domain occupies Glu254–Leu455. The active-site Nucleophile is Cys335. His447 is a catalytic residue.

It belongs to the CobB/CobQ family. CobQ subfamily.

Its pathway is cofactor biosynthesis; adenosylcobalamin biosynthesis. In terms of biological role, catalyzes amidations at positions B, D, E, and G on adenosylcobyrinic A,C-diamide. NH(2) groups are provided by glutamine, and one molecule of ATP is hydrogenolyzed for each amidation. This chain is Cobyric acid synthase, found in Desulforamulus reducens (strain ATCC BAA-1160 / DSM 100696 / MI-1) (Desulfotomaculum reducens).